A 329-amino-acid chain; its full sequence is Endonuclease 8-like 2 (329 aa).

The active-site Schiff-base intermediate with DNA is proline 2. Glutamate 3 serves as the catalytic Proton donor. Lysine 50 acts as the Proton donor; for beta-elimination activity in catalysis. An N6-acetyllysine modification is found at lysine 50. At serine 68 the chain carries Phosphoserine. The disordered stretch occupies residues 88–112; that stretch reads GPSAQEPSAGPSGSGEPVPSRSAET. Residue lysine 150 is modified to N6-acetyllysine. Residue asparagine 227 participates in DNA binding. The FPG-type zinc-finger motif lies at 280–316; it reads QIYQKEQCPSGHQVMKETFGPPDGLQRLTWWCPQCQP. The Proton donor; for delta-elimination activity role is filled by arginine 306.

The protein belongs to the FPG family. Binds EP300.

It is found in the nucleus. The catalysed reaction is 2'-deoxyribonucleotide-(2'-deoxyribose 5'-phosphate)-2'-deoxyribonucleotide-DNA = a 3'-end 2'-deoxyribonucleotide-(2,3-dehydro-2,3-deoxyribose 5'-phosphate)-DNA + a 5'-end 5'-phospho-2'-deoxyribonucleoside-DNA + H(+). Its activity is regulated as follows. Acetylation of Lys-50 leads to loss of DNA nicking activity. Its function is as follows. Involved in base excision repair of DNA damaged by oxidation or by mutagenic agents. Has DNA glycosylase activity towards 5-hydroxyuracil and other oxidized derivatives of cytosine with a preference for mismatched double-stranded DNA (DNA bubbles). Has low or no DNA glycosylase activity towards thymine glycol, 2-hydroxyadenine, hypoxanthine and 8-oxoguanine. Has AP (apurinic/apyrimidinic) lyase activity and introduces nicks in the DNA strand. Cleaves the DNA backbone by beta-delta elimination to generate a single-strand break at the site of the removed base with both 3'- and 5'-phosphates. This chain is Endonuclease 8-like 2 (Neil2), found in Mus musculus (Mouse).